We begin with the raw amino-acid sequence, 132 residues long: Small ribosomal subunit protein uS8 (132 aa).

This sequence belongs to the universal ribosomal protein uS8 family. In terms of assembly, part of the 30S ribosomal subunit. Contacts proteins S5 and S12.

Its function is as follows. One of the primary rRNA binding proteins, it binds directly to 16S rRNA central domain where it helps coordinate assembly of the platform of the 30S subunit. This chain is Small ribosomal subunit protein uS8, found in Leptospira biflexa serovar Patoc (strain Patoc 1 / Ames).